The chain runs to 92 residues: DNA/RNA-binding protein Alba (92 aa).

The residue at position 11 (lysine 11) is an N6-acetyllysine.

The protein belongs to the histone-like Alba family. Post-translationally, acetylated. Acetylation at Lys-11 decreases DNA-binding affinity.

The protein localises to the cytoplasm. Its subcellular location is the chromosome. Functionally, binds double-stranded DNA tightly but without sequence specificity. Involved in DNA compaction. This chain is DNA/RNA-binding protein Alba, found in Pyrobaculum aerophilum (strain ATCC 51768 / DSM 7523 / JCM 9630 / CIP 104966 / NBRC 100827 / IM2).